Consider the following 226-residue polypeptide: Phosphoribosylformylglycinamidine synthase subunit PurQ (226 aa).

The Glutamine amidotransferase type-1 domain maps to 3 to 226 (RVAVIRFPGT…FESLVEWCRS (224 aa)). The active-site Nucleophile is the Cys86. Catalysis depends on residues His199 and Glu201.

In terms of assembly, part of the FGAM synthase complex composed of 1 PurL, 1 PurQ and 2 PurS subunits.

It localises to the cytoplasm. It catalyses the reaction N(2)-formyl-N(1)-(5-phospho-beta-D-ribosyl)glycinamide + L-glutamine + ATP + H2O = 2-formamido-N(1)-(5-O-phospho-beta-D-ribosyl)acetamidine + L-glutamate + ADP + phosphate + H(+). The enzyme catalyses L-glutamine + H2O = L-glutamate + NH4(+). It participates in purine metabolism; IMP biosynthesis via de novo pathway; 5-amino-1-(5-phospho-D-ribosyl)imidazole from N(2)-formyl-N(1)-(5-phospho-D-ribosyl)glycinamide: step 1/2. In terms of biological role, part of the phosphoribosylformylglycinamidine synthase complex involved in the purines biosynthetic pathway. Catalyzes the ATP-dependent conversion of formylglycinamide ribonucleotide (FGAR) and glutamine to yield formylglycinamidine ribonucleotide (FGAM) and glutamate. The FGAM synthase complex is composed of three subunits. PurQ produces an ammonia molecule by converting glutamine to glutamate. PurL transfers the ammonia molecule to FGAR to form FGAM in an ATP-dependent manner. PurS interacts with PurQ and PurL and is thought to assist in the transfer of the ammonia molecule from PurQ to PurL. The polypeptide is Phosphoribosylformylglycinamidine synthase subunit PurQ (Methanopyrus kandleri (strain AV19 / DSM 6324 / JCM 9639 / NBRC 100938)).